The following is a 284-amino-acid chain: NAD kinase (284 aa).

The Proton acceptor role is filled by aspartate 70. Residues aspartate 70–glycine 71, asparagine 139–glutamate 140, lysine 167, aspartate 169, leucine 177, threonine 180–serine 185, and glutamine 236 contribute to the NAD(+) site.

The protein belongs to the NAD kinase family. Requires a divalent metal cation as cofactor.

The protein resides in the cytoplasm. The catalysed reaction is NAD(+) + ATP = ADP + NADP(+) + H(+). Its function is as follows. Involved in the regulation of the intracellular balance of NAD and NADP, and is a key enzyme in the biosynthesis of NADP. Catalyzes specifically the phosphorylation on 2'-hydroxyl of the adenosine moiety of NAD to yield NADP. In Helicobacter pylori (strain P12), this protein is NAD kinase.